A 107-amino-acid polypeptide reads, in one-letter code: Putative double-stranded DNA mimic protein CGSHiGG_01135 (107 aa).

Belongs to the putative dsDNA mimic protein family.

May act as a double-stranded DNA (dsDNA) mimic. Probably regulates the activity of a dsDNA-binding protein. The chain is Putative double-stranded DNA mimic protein CGSHiGG_01135 from Haemophilus influenzae (strain PittGG).